Reading from the N-terminus, the 394-residue chain is Endothelial cell-selective adhesion molecule (394 aa).

An N-terminal signal peptide occupies residues 1–29 (MILPARTPETSLLRVLFLGLSTLAAFSLA). Residues 30 to 251 (QMELHVPPGL…LDVMTGSKAA (222 aa)) lie on the Extracellular side of the membrane. In terms of domain architecture, Ig-like V-type spans 37–146 (PGLNKLEAVE…DGKNIGHSIK (110 aa)). N-linked (GlcNAc...) asparagine glycosylation is found at Asn-111, Asn-172, Asn-216, and Asn-239. One can recognise an Ig-like C2-type domain in the interval 156–243 (PAPPSCSFQG…GFAQCNVTLD (88 aa)). Cys-177 and Cys-227 are oxidised to a cystine. A helical membrane pass occupies residues 252 to 272 (VVAGAVVGTFVGLVLIAGLVL). Topologically, residues 273–394 (LYQRRSKTLE…PAQSQAGSLV (122 aa)) are cytoplasmic. Residues 300–372 (WTKGSDTISK…SLTPGGVSSS (73 aa)) are disordered. 2 stretches are compositionally biased toward polar residues: residues 303 to 318 (GSDT…SVTS) and 335 to 347 (FTPT…QALS). Position 304 is a phosphoserine (Ser-304). Phosphothreonine occurs at positions 336 and 338. Phosphoserine occurs at positions 340, 343, and 348.

As to quaternary structure, interacts with MAGI1.

The protein resides in the cell junction. Its subcellular location is the adherens junction. It localises to the tight junction. The protein localises to the cell membrane. Can mediate aggregation most likely through a homophilic molecular interaction. The protein is Endothelial cell-selective adhesion molecule (Esam) of Rattus norvegicus (Rat).